We begin with the raw amino-acid sequence, 173 residues long: Co-chaperone protein HscB homolog (173 aa).

The J domain occupies Cys-5–Ile-77.

The protein belongs to the HscB family. Interacts with HscA and stimulates its ATPase activity.

Functionally, co-chaperone involved in the maturation of iron-sulfur cluster-containing proteins. Seems to help targeting proteins to be folded toward HscA. This Pseudomonas fluorescens (strain Pf0-1) protein is Co-chaperone protein HscB homolog.